The following is an 815-amino-acid chain: MFMSSSSSSHARRPQLSSFSYLHPPLPFPGLSFFNTRDKRVNFDSTRIICIAKSKPARTTPEYSDVLQTGLPLIVEDDIQEQEEPLEVSLENQIRQGVDIVKSMLGSMEDGETSISAYDTAWVALVENIHHPGSPQFPSSLQWIANNQLPDGSWGDPDVFLAHDRLINTLACVIALKKWNIHPHKCKRGLSFVKENISKLEKENEEHMLIGFEIAFPSLLEMAKKLGIEIPDDSPALQDIYTKRDLKLTRIPKDIMHNVPTTLLYSLEGLPSLDWEKLVKLQCTDGSFLFSPSSTACALMHTKDGNCFSYINNLVHKFNGGVPTVYPVDLFEHIWCVDRLQRLGISRFFHPEIKECLGYVHRYWTKDGICWARNSRVQDIDDTAMGFRLLRLHGYEVSPDVFKQFRKGDEFVCFMGQSNQAITGIYNLYRASQMMFPEETILEEAKKFSVNFLREKRAASELLDKWIITKDLPNEVGFALDVPWYACLPRVETRLYIEQYGGQDDVWIGKTLYRMPYVNNNVYLELAKLDYNNCQSLHRIEWDNIQKWYEGYNLGGFGVNKRSLLRTYFLATSNIFEPERSVERLTWAKTAILVQAIASYFENSREERIEFANEFQKFPNTRGYINGRRLDVKQATKGLIEMVFATLNQFSLDALVVHGEDITHHLYQSWEKWVLTWQEGGDRREGEAELLVQTINLMAGHTHSQEEELYERLFKLTNTVCHQLGHYHHLNKDKQPQQVEDNGGYNNSNPESISKLQIESDMRELVQLVLNSSDGMDSNIKQTFLAVTKSFYYTAFTHPGTVNYHIAKVLFERVV.

The transit peptide at 1–51 (MFMSSSSSSHARRPQLSSFSYLHPPLPFPGLSFFNTRDKRVNFDSTRIICI) directs the protein to the chloroplast. Residue lysine 247 participates in substrate binding. The Mg(2+) site is built by aspartate 379 and aspartate 381. Positions 379-382 (DIDD) match the DXDD motif motif. Lysine 465 is a substrate binding site.

This sequence belongs to the terpene synthase family. Tpsc subfamily. Requires Mg(2+) as cofactor.

It is found in the plastid. The protein resides in the chloroplast. It carries out the reaction (2E,6E,10E)-geranylgeranyl diphosphate = (-)-kolavenyl diphosphate. Its activity is regulated as follows. Inhibited by high concentrations of magnesium. Diterpene synthase that catalyzes the formation of (-)-kolavenyl diphosphate from geranylgeranyl diphosphate (GGPP). The chain is (-)-kolavenyl diphosphate synthase TPS14, chloroplastic from Tripterygium wilfordii (Thunder God vine).